The chain runs to 145 residues: Ribosomal RNA large subunit methyltransferase H (145 aa).

S-adenosyl-L-methionine contacts are provided by residues leucine 68, glycine 95, and 113–118; that span reads FSKMTF.

Belongs to the RNA methyltransferase RlmH family. As to quaternary structure, homodimer.

It localises to the cytoplasm. It carries out the reaction pseudouridine(1915) in 23S rRNA + S-adenosyl-L-methionine = N(3)-methylpseudouridine(1915) in 23S rRNA + S-adenosyl-L-homocysteine + H(+). Its function is as follows. Specifically methylates the pseudouridine at position 1915 (m3Psi1915) in 23S rRNA. The sequence is that of Ribosomal RNA large subunit methyltransferase H from Mycoplasmopsis pulmonis (strain UAB CTIP) (Mycoplasma pulmonis).